We begin with the raw amino-acid sequence, 415 residues long: Glutamyl-tRNA reductase (415 aa).

Substrate is bound by residues 49–52 (TCNR), S104, 109–111 (EPQ), and Q115. C50 acts as the Nucleophile in catalysis. 184-189 (GAGEMI) provides a ligand contact to NADP(+).

This sequence belongs to the glutamyl-tRNA reductase family. As to quaternary structure, homodimer.

The catalysed reaction is (S)-4-amino-5-oxopentanoate + tRNA(Glu) + NADP(+) = L-glutamyl-tRNA(Glu) + NADPH + H(+). Its pathway is porphyrin-containing compound metabolism; protoporphyrin-IX biosynthesis; 5-aminolevulinate from L-glutamyl-tRNA(Glu): step 1/2. In terms of biological role, catalyzes the NADPH-dependent reduction of glutamyl-tRNA(Glu) to glutamate 1-semialdehyde (GSA). The chain is Glutamyl-tRNA reductase from Neisseria meningitidis serogroup B (strain ATCC BAA-335 / MC58).